The primary structure comprises 1182 residues: Rho GTPase-activating protein 20 (1182 aa).

A disordered region spans residues 1–40; sequence MEAMSPQQDALGAQPGRSSSLTGMSRIAGGPGTKKKMKTL. Serine 46 is subject to Phosphoserine. The 102-residue stretch at 86-187 folds into the PH domain; sequence LLIDGPVELK…SLLQRYIALE (102 aa). A Ras-associating domain is found at 194-283; that stretch reads KSIPLKIFAK…TALLTQGSKD (90 aa). A Rho-GAP domain is found at 365–551; it reads VSLPDICEND…FLIENCCRIF (187 aa). Residues serine 704 and serine 730 each carry the phosphoserine modification. 4 disordered regions span residues 744–791, 932–953, 981–1009, and 1140–1182; these read KQTQ…IQET, ASYS…SSQD, QRKQ…GQAS, and EESG…GDRH. Polar residues predominate over residues 757–775; the sequence is FKQSSVTGTDVSKRNTANE. The span at 933–953 shows a compositional bias: low complexity; it reads SYSSLSSPGTSPSGSSVSSQD.

Highest expression is found in testis. Ubiquitously expressed in extragonadal tissues.

GTPase activator for the Rho-type GTPases by converting them to an inactive GDP-bound state. This Rattus norvegicus (Rat) protein is Rho GTPase-activating protein 20 (Arhgap20).